The primary structure comprises 3574 residues: MTSSSHNIELEAAKFLHKLIQDSKDEPAKLATKLYVILQHMKTSGKENTMPYQVISRAMDTVVNQHGLDIEALKSSCLPHPGGTQTEDSGSAHLAGSSQAVGVSNEGKATLVENEMTKYDAFTSGRQLGGSNSASQTFYQGSGTQSNRSFDRESPSNLDSTSGISQPHNRSETMNQRDVKSSGKRKRGESSLSWDQNMDNSQIFDSHKIDDQTGEVSKIEMPGNSGDIRNLHVGLSSDAFTTPQCGWQSSEATAIRPAIHKEPGNNVAGEGFLPSGSPFREQQLKQLRAQCLVFLALRNGLVPKKLHVEIALRNTFREEDGFRGELFDPKGRTHTSSDLGGIPDVSALLSRTDNPTGRLDEMDFSSKETERSRLGEKSFANTVFSDGQKLLASRIPSSQAQTQVAVSHSQLTFSPGLTKNTPSEMVGWTGVIKTNDLSTSAVQLDEFHSSDEEEGNLQPSPKYTMSQKWIMGRQNKRLLVDRSWSLKQQKADQAIGSRFNELKESVSLSDDISAKTKSVIELKKLQLLNLQRRLRSEFVYNFFKPIATDVEHLKSYKKHKHGRRIKQLEKYEQKMKEERQRRIRERQKEFFGGLEVHKEKLEDLFKVRRERLKGFNRYAKEFHKRKERLHREKIDKIQREKINLLKINDVEGYLRMVQDAKSDRVKQLLKETEKYLQKLGSKLKEAKLLTSRFENEADETRTSNATDDETLIENEDESDQAKHYLESNEKYYLMAHSIKENINEQPSSLVGGKLREYQMNGLRWLVSLYNNHLNGILADEMGLGKTVQVISLICYLMETKNDRGPFLVVVPSSVLPGWQSEINFWAPSIHKIVYCGTPDERRKLFKEQIVHQKFNVLLTTYEYLMNKHDRPKLSKIHWHYIIIDEGHRIKNASCKLNADLKHYVSSHRLLLTGTPLQNNLEELWALLNFLLPNIFNSSEDFSQWFNKPFQSNGESSAEEALLSEEENLLIINRLHQVLRPFVLRRLKHKVENELPEKIERLIRCEASAYQKLLMKRVEDNLGSIGNAKSRAVHNSVMELRNICNHPYLSQLHSEEVNNIIPKHFLPPIVRLCGKLEMLDRMLPKLKATDHRVLFFSTMTRLLDVMEDYLTLKGYKYLRLDGQTSGGDRGALIDGFNKSGSPFFIFLLSIRAGGVGVNLQAADTVILFDTDWNPQVDLQAQARAHRIGQKKDVLVLRFETVNSVEEQVRASAEHKLGVANQSITAGFFDNNTSAEDRKEYLESLLRESKKEEDAPVLDDDALNDLIARRESEIDIFESIDKQRKENEMETWNTLVHGPGSDSFAHIPSIPSRLVTEDDLKLLYETMKLNDVPMVAKESTVGMKRKDGSMGGLDTHQYGRGKRAREVRSYEEKLTEEEFEKLCQTESPDSPQGKGEGSERSLANDTSNIPVENSSDTLLPTSPTQAITVQPMEPVRPQSHTLKEETQPIKRGRGRPKRTDKALTPVSLSAVSRTQATGNAISSAATGLDFVSSDKRLEAASHPTSSLALTSPDLSGPPGFQSLPASPAPTPIRGRGRGRSRGRGAGRGRRVEGVLHGSNSSITQRTETATSLASDAEATKFALPRSASEIVSRVPKANEGSTSNPDQVSPVHSATTALRSDKAADKDLDAPPGFDSGSHVQTLNVLENSSERKAFAVKKRPLIQGVSSQHPGPNKQPLDLPVSTSSTLLGGGPVQNQNAVSSVCDGSKSPSEGRTYTALQGVTTAPSDATLPMSSQPSDATLPMSSQPVGSTVEAQEANVPSLPAALPAKRRVRNLPSRGETPKRQGKRRGQPLPATDASSARSTGLTPQIEVKVGNLSGTKAKFDAVAKEQPHFSQSVAPDIHSSGSLSQEIRRDTSGTGGSARKQTADVTDVARVMKEIFSETSLLKHKVGEPSATTRTNVPDAQSPGEMNLHTVETHKAEDSSGLKNQEALYNLSKADKLVSDIPHPVPGDLTTSGSVANKDVDIGSSKVAAENELVKIPGGDVDSSVIQLSLGNTLTAKSSLEKCTADQLLGEKLSQEGETTPASDGETCHLAEETASSLSYVRSEPTASASTTAEPLPTDKLEKNISFQDEVKTLNGDKREAILLSSEEQTNVNSKIETNSEELQASRTDEVPHVDGKSVDVANQTVKEDEAKHSVEIQSSMLEPDELPNAGQKGHSSIDLQPLVLVTSNENAMSLDDKDYDPISKSADIEQDPEESVFVQGVGRPKVGTADTQMEDTNDAKLLVGCSVESEEKEKTLQSLIPGDDADTEQDPEESVSDQRPKVGSAYTQMEDTDEAKLLMGCSVESEEKEKTLQSHIPGDDADTEKNPEESVSVQGVDRPKVGTTDTQMEDTNDAKLLVGCSVASEEKEKTLQSHIPGDDADTEQNPEESVSVQGVNRPKVGNANTQMEDTDEAKVLVGCSVESEEKEKTLQSHIPGDDADTEQNPEESVSNFDRPKDGTADTHMEDIDDAKLLVGCSVESEEKEKSLQSHMPSDDAVLHAPFENTKDSKGDDLHGESLVSCPTMEVMEQKGFESETHARTDSGGIDRGNEVSENMSDGVKMNISSVQVPDASHDLNVSQDQTDIPLVGGIDPEHVQENVDVPASPHGAAPNIVIFQSEGHLSPSILPDDVAGQLESMSNDEKTNISSEQVPDVSHDLKVSQDQTDIPPVGGIVPENLQEIVDVPASPHGVVPDVVVSQSEEIQSPSILPDDVPGQPDDGNCEKMDTMQNNTSIDIGITSGKTCQPSSSTQPEDENRNSLSHCEPSEVVEQRDSRDQVCIGSVESQVEISSAILENRSADIQPPQSILVDQKDIEESKEPGIESADVSLHQLADIQAEPSNLVDQMDIEESKEPGTESADVSLHQLADIQPGPSILVDQMDTEKSKEPGTESADVSLHQLADIQPGPSILVDQMDTEKSKEPGTESADVSLHQLADIQPGPSILVDQMDTEEFKNPDVSLHQLADIEPSLSISAVQKNIEDKDQSHVETAGSELVDVSAECSTEPQVQLPPSSEPVGDMHVHLGASKSEIVAEGTDFSSSLPKTEEENAKSQLADTEPSSSLTAVQKNIEDQVETAGCEFVVVSTGCSTEPQVQLPPSAEPVVAEGTEFPSSLLMTGVDNSSHLMTGVDNAKTHLADVVPSSSPTTMEKNIEAQDQDQVTTGGCGLVDVLTECSSEPQLQLPPSAEPVISEGTELATLPLTEEENADSQLANIEPSSSPSVVEKNIEAQDQDQVKTAGCELVSTGCSSEPQVHLPPSAEPDGDIHVHLKETEKSESMVVVGEGTAFPSSLPVTEEGNAESQLADTEPFTSPTVVEKNIKDQEQVETTGCGLVDDSTGCSSEPQVQLPPSAEPMEGTHMHLEETKKSETVVTEIQLADIDPSFSLIVVQTNIEDQDQIETGGCDLINVPSGCSTEPQIQLSSSAEPEEGMHIHLEAAMNSETVVTEGSELPSSLPMTEDENADGQLAEVEPSVSLTVEQTNIEEKDHIETAECELVDVSPGCSSQPEVKFPPSPDAVGGMDVHLETVVTEDTDSNSSLPKTEEKDAENPSDRLDGESDGTTVATVEGTCVESNSLVAEESNIEVPKDNEDV.

3 disordered regions span residues 76 to 105 (SCLP…GVSN), 123 to 211 (TSGR…KIDD), and 328 to 372 (DPKG…TERS). 2 stretches are compositionally biased toward polar residues: residues 124–148 (SGRQ…QSNR) and 155–168 (PSNL…SQPH). A compositionally biased stretch (basic and acidic residues) spans 169–181 (NRSETMNQRDVKS). The segment covering 194–204 (WDQNMDNSQIF) has biased composition (polar residues). The segment covering 358–372 (RLDEMDFSSKETERS) has biased composition (basic and acidic residues). In terms of domain architecture, HSA spans 573–647 (QKMKEERQRR…QREKINLLKI (75 aa)). The 168-residue stretch at 766–933 (VSLYNNHLNG…WALLNFLLPN (168 aa)) folds into the Helicase ATP-binding domain. 779 to 786 (DEMGLGKT) provides a ligand contact to ATP. The short motif at 884–887 (DEGH) is the DEAH box element. Positions 1077 to 1223 (MLDRMLPKLK…KLGVANQSIT (147 aa)) constitute a Helicase C-terminal domain. Residues 1266-1273 (ARRESEID) carry the Nuclear localization signal motif. 19 disordered regions span residues 1342-1472 (KRKD…VSRT), 1500-1575 (HPTS…SDAE), 1588-1637 (IVSR…SGSH), 1690-1811 (GPVQ…QIEV), 1830-1868 (QPHF…QTAD), 2040-2068 (SSLS…LEKN), 2089-2115 (SSEE…TDEV), 2143-2162 (SSML…HSSI), 2179-2220 (LDDK…QMED), 2235-2338 (EEKE…DTND), 2350-2451 (EEKE…HMED), 2517-2538 (FESE…EVSE), 2684-2703 (SEEI…QPDD), 2718-2759 (IDIG…RDSR), 2865-2884 (DTEK…LHQL), 3017-3045 (EGTD…PSSS), 3189-3208 (NADS…VVEK), 3316-3337 (VDDS…AEPM), and 3512-3574 (TEDT…NEDV). Residues 1362 to 1371 (AREVRSYEEK) are compositionally biased toward basic and acidic residues. Composition is skewed to polar residues over residues 1399 to 1426 (SLAN…QAIT) and 1500 to 1511 (HPTSSLALTSPD). A compositionally biased stretch (basic residues) spans 1532-1546 (GRGRGRSRGRGAGRG). Polar residues-rich tracts occupy residues 1555 to 1571 (GSNS…TSLA) and 1597 to 1614 (EGST…SATT). Residues 1617 to 1627 (RSDKAADKDLD) show a composition bias toward basic and acidic residues. Composition is skewed to polar residues over residues 1690 to 1699 (GPVQNQNAVS), 1706 to 1752 (KSPS…STVE), 1796 to 1806 (DASSARSTGLT), 1832 to 1849 (HFSQ…SLSQ), 2040 to 2057 (SSLS…STTA), and 2090 to 2110 (SEEQ…LQAS). Acidic residues predominate over residues 2248 to 2260 (DDADTEQDPEESV). The segment covering 2438–2451 (DRPKDGTADTHMED) has biased composition (basic and acidic residues). The segment covering 2718-2735 (IDIGITSGKTCQPSSSTQ) has biased composition (polar residues). Composition is skewed to polar residues over residues 3034 to 3045 (KSQLADTEPSSS) and 3191 to 3204 (DSQL…SSPS). The segment covering 3523 to 3538 (KTEEKDAENPSDRLDG) has biased composition (basic and acidic residues).

Belongs to the SNF2/RAD54 helicase family. As to quaternary structure, interacts with LFY. Binds to BARD1/ROW1. Post-translationally, phosphorylated. In terms of tissue distribution, mostly expressed in rapidly dividing cells in the vegetative, inflorescence, and root meristems, as well as in young leaf and flower primordia. Isoform 1 is predominantly found in seedlings whereas isoform 2 is present in both seedlings and inflorescences (at protein level).

It is found in the cytoplasm. It localises to the nucleus. Functionally, catalytic component of the chromatin structure-remodeling complex (RSC), which is involved in transcription regulation and nucleosome positioning. Controls stem cell fate via the transcription regulation of WUS in the shoot apical meristem, by modulating its promoter. LFY-dependent repressor of the meristem identity switch from vegetative to reproductive development probably by modulating chromatin state. Involved in the regulation of floral homeotic gene expression in response to environmental stimuli. Required for carpel and ovule development, and for cotyledon separation via the regulation of CUC2 transcription. Regulates the promoters of several genes downstream of the jasmonate (JA) and ethylene (ET) signaling pathways. Required for resistance against the necrotrophic pathogen B.cinerea but not the biotrophic pathogen P.syringae. The sequence is that of Chromatin structure-remodeling complex protein SYD (SYD) from Arabidopsis thaliana (Mouse-ear cress).